We begin with the raw amino-acid sequence, 143 residues long: Peptide methionine sulfoxide reductase B8 (143 aa).

In terms of domain architecture, MsrB spans 18–139 (DEEWRAVLSP…NSVSLKFASA (122 aa)). Zn(2+) contacts are provided by C57, C60, C103, and C106. C75 and C128 are oxidised to a cystine. The Nucleophile role is filled by C128.

This sequence belongs to the MsrB Met sulfoxide reductase family. The cofactor is Zn(2+).

It is found in the cytoplasm. It localises to the cytosol. The enzyme catalyses L-methionyl-[protein] + [thioredoxin]-disulfide + H2O = L-methionyl-(R)-S-oxide-[protein] + [thioredoxin]-dithiol. In terms of biological role, catalyzes the reduction of methionine sulfoxide (MetSO) to methionine in proteins. Plays a protective role against oxidative stress by restoring activity to proteins that have been inactivated by methionine oxidation. MSRB family specifically reduces the MetSO R-enantiomer. In Arabidopsis thaliana (Mouse-ear cress), this protein is Peptide methionine sulfoxide reductase B8 (MSRB8).